Reading from the N-terminus, the 186-residue chain is Potassium-transporting ATPase KdpC subunit (186 aa).

The chain crosses the membrane as a helical span at residues 10 to 30; that stretch reads LTIITMVLCGFLFPLAITLIG.

The protein belongs to the KdpC family. The system is composed of three essential subunits: KdpA, KdpB and KdpC.

It is found in the cell membrane. Its function is as follows. Part of the high-affinity ATP-driven potassium transport (or Kdp) system, which catalyzes the hydrolysis of ATP coupled with the electrogenic transport of potassium into the cytoplasm. This subunit acts as a catalytic chaperone that increases the ATP-binding affinity of the ATP-hydrolyzing subunit KdpB by the formation of a transient KdpB/KdpC/ATP ternary complex. The polypeptide is Potassium-transporting ATPase KdpC subunit (Staphylococcus aureus (strain COL)).